The primary structure comprises 475 residues: Protein EARLY HEADING DATE 2 (475 aa).

The segment covering 1–16 (MLLSDLSSDQEATGSN) has biased composition (polar residues). The disordered stretch occupies residues 1–26 (MLLSDLSSDQEATGSNSHGGGGGDRM). 2 consecutive C2H2-type zinc fingers follow at residues 105–127 (FVCE…RRGH) and 155–185 (YVCP…SRKH). 2 consecutive short sequence motifs (nuclear localization signal) follow at residues 123-130 (HRRGHNLP) and 177-184 (IKKHFSRK). A C2H2-type 2; degenerate zinc finger spans residues 190–213 (WRCERCGKRYAVHSDWKAHVKNCG). Zn(2+)-binding residues include cysteine 192, cysteine 195, histidine 208, cysteine 212, cysteine 219, cysteine 221, histidine 234, and cysteine 238. The CCHC-type 2; atypical zinc-finger motif lies at 217-240 (YRCDCGILFSRKDSLLTHRAFCDA). An SHR-binding region spans residues 227 to 239 (RKDSLLTHRAFCD).

Mostly expressed in developing leaves (more in sheaths than in blades, especially in the outer epidermal cell of immature leaves and in the region immediately beneath the meristem where internodes are visible) and panicles, and, at very low levels, around the shoot apex and in roots.

Its subcellular location is the nucleus. Its function is as follows. Transcription activator that acts as a flowering master switch in both long and short days, independently of the circadian clock. Promotes flowering upstream of HD1 by up-regulating FTL1, FTL4, FTL5, FTL6, EHD1, HD3A and RFT1. Seems to repress FTL11 expression. May recognize the consensus motif 5'-TTTGTCGTAAT-3' in target gene promoters. This is Protein EARLY HEADING DATE 2 from Oryza sativa subsp. japonica (Rice).